We begin with the raw amino-acid sequence, 201 residues long: Calcium channel flower (201 aa).

3 consecutive transmembrane segments (helical) span residues 37–57 (LGIVGAFFAILFGLWNVLSII), 59–79 (LSVSCLVAGIIQMIAGFVVMA), and 103–120 (PMYFRAGLYCALAVPPIF).

Belongs to the calcium channel flower family. As to quaternary structure, homomultimer. Associates with the dally/ magu complex.

It localises to the cell membrane. Its subcellular location is the cytoplasmic vesicle. The protein resides in the secretory vesicle. It is found in the synaptic vesicle membrane. The protein localises to the presynaptic cell membrane. It localises to the endosome. Channel activity is inhibited by La(3+), which reduces Ca(2+) influx and thus inhibits it's function in promoting activity-dependent bulk endocytosis (ADBE) in response to high stimuli. In terms of biological role, transmembrane protein which mediates synaptic endocytosis, fitness-based cell culling, neuronal culling, morphogen gradient scaling, and calcium transport. Regulates synaptic endocytosis and hence couples exo- with endocytosis. Controls two major modes of synaptic vesicle (SV) endocytosis in the synaptic boutons of neuromuscular junctions (NMJs); Ca(2+) channel-independent Clathrin-mediated endocytosis (CME) in response to mild stimulation, and Ca(2+) channel-dependent activity-dependent bulk endocytosis (ADBE) in response to strong stimulation. Functions in ADBE and subsequent SV reformation from bulk endosomes by initiating Ca(2+) channel-dependent phosphatidylinositol 4,5-bisphosphate (PtdIns(4,5)P2) compartmentalization in synaptic boutons. There it acts at the periactive zone to provide the low Ca(2+) levels required to initiate Calcineurin activation and upregulate PtdIns(4,5)P2. Conversely PtdIns(4,5)P2 enhances fwe Ca(2+) channel-activity, establishing a positive feedback loop that induces PtdIns(4,5)P2 microdomain at the periactive zone. These microdomains trigger bulk membrane invagination (i.e. ADBE) by triggering actin polymerization while also promoting localization of fwe to bulk endosomes, thereby removing the ADBE trigger to reduce endocytosis and prevent excess membrane uptake. PtdIns(4,5)P2 then promotes SV reformation from the bulk endosomes, to coordinate ADBE and subsequent SV reformation. Different combinations of the flower isoforms at the cell membrane are also required for the identification and elimination of suboptimal or supernumerary cells during development, regeneration, and adulthood. Required for the recognition and elimination of unfit cells in the developing wing during cell competition. In the developing pupal retina, mediates the elimination of unwanted postmitotic neurons, including supernumerary photoreceptor neurons that form at the periphery of the retina and are contained within incomplete ommatidia units. Also required for efficient elimination and replacement of old neurons by newly generated neurons during regeneration in the adult brain following mechanical injury. Downstream of the flower fitness fingerprints, cells identified as unwanted or unfit are eliminated via apoptosis through the expression of ahuizotl (azot). However, the cells marked for elimination by the flower isoforms only undergo apoptosis if additional thresholds are met; (1) their neighboring fit/healthy cells express different levels of the fwe isoforms, and (2) the levels of the protective signal SPARC expressed by the loser or unwanted cells are unable to inhibit caspase activation. These additional thresholds for flower-mediated apoptosis, allows useful cells to recover from transient and limited stress before they are unnecessarily eliminated. Functions with dally and magu in a mechanism of scaling, which utilises apoptosis to ensure that the dpp morphogen gradient, which mediates organ growth, remains proportional to the size of the growing wing. In this mechanism, fwe represses dally- and Magu-dependent activity in expanding the gradient, and dally/Magu inhibits fwe-dependent apoptosis to keep cell death rate low. When the levels of these different proteins are optimally regulated the gradient correctly scales with organ growth but when this fails, fwe-mediated apoptosis is activated to trim the developing tissue to match the correct size of the gradient. The protein is Calcium channel flower of Drosophila willistoni (Fruit fly).